Reading from the N-terminus, the 400-residue chain is Phosphoglycerate kinase (400 aa).

Substrate is bound by residues 23–25, arginine 38, 61–64, arginine 120, and arginine 153; these read DLN and HFGR. Residues lysine 203, glutamate 325, and 355–358 each bind ATP; that span reads GGDT.

It belongs to the phosphoglycerate kinase family. Monomer.

The protein localises to the cytoplasm. The enzyme catalyses (2R)-3-phosphoglycerate + ATP = (2R)-3-phospho-glyceroyl phosphate + ADP. It participates in carbohydrate degradation; glycolysis; pyruvate from D-glyceraldehyde 3-phosphate: step 2/5. This Methylorubrum populi (strain ATCC BAA-705 / NCIMB 13946 / BJ001) (Methylobacterium populi) protein is Phosphoglycerate kinase.